Reading from the N-terminus, the 368-residue chain is N-acetylneuraminate epimerase (368 aa).

Positions 1 to 19 (MNKTITALAIIMASFAANA) are cleaved as a signal peptide. Kelch repeat units follow at residues 40-84 (TVYI…AFID), 86-137 (NLYV…FVHN), 139-173 (KAYV…KINA), 174-219 (YYFD…VNKG), 222-265 (TWLI…VAGG), 287-336 (ENYQ…PWNN), and 338-367 (LLII…VTVQ). The Proton acceptor role is filled by Glu-228.

Belongs to the NanM family. Homodimer.

The protein localises to the periplasm. The enzyme catalyses N-acetyl-alpha-neuraminate = N-acetyl-beta-neuraminate. In terms of biological role, converts alpha-N-acetylneuranimic acid (Neu5Ac) to the beta-anomer, accelerating the equilibrium between the alpha- and beta-anomers. Probably facilitates sialidase-negative bacteria to compete successfully for limited amounts of extracellular Neu5Ac, which is likely taken up in the beta-anomer. In addition, the rapid removal of sialic acid from solution might be advantageous to the bacterium to damp down host responses. The polypeptide is N-acetylneuraminate epimerase (Escherichia coli O139:H28 (strain E24377A / ETEC)).